The chain runs to 305 residues: Glycine betaine-binding protein YehZ (305 aa).

Residues 1–23 form the signal peptide; that stretch reads MPLLKLWAGSLVMLAAVSLPLQA.

It belongs to the OsmX family. As to quaternary structure, the complex is composed of two ATP-binding proteins (YehX), two transmembrane proteins (YehW and YehY) and a solute-binding protein (YehZ).

The protein resides in the periplasm. In terms of biological role, part of an ABC transporter complex involved in low-affinity glycine betaine uptake. Binds glycine betaine with low affinity. In Escherichia coli (strain K12), this protein is Glycine betaine-binding protein YehZ (yehZ).